A 92-amino-acid polypeptide reads, in one-letter code: Dynein light chain 1, cytoplasmic (92 aa).

The protein belongs to the dynein light chain family. In terms of assembly, homodimer. Cytoplasmic dynein consists of two catalytic heavy chains (HCs) and a number of non-catalytic subunits which present intermediate chains (ICs), light intermediate chains (LICs) and light chains (LCs). Component of the nuclear pore complex (NPC). NPC constitutes the exclusive means of nucleocytoplasmic transport. NPCs allow the passive diffusion of ions and small molecules and the active, nuclear transport receptor-mediated bidirectional transport of macromolecules such as proteins, RNAs, ribonucleoparticles (RNPs), and ribosomal subunits across the nuclear envelope. Due to its 8-fold rotational symmetry, all subunits are present with 8 copies or multiples thereof. Part of the NUP82 subcomplex. In the complex, interacts directly with Nup159.

The protein resides in the cytoplasm. It localises to the cytoskeleton. The protein localises to the nucleus. Its subcellular location is the nuclear pore complex. Functionally, acts as one of several non-catalytic accessory components of the cytoplasmic dynein complex that are thought to be involved in linking dynein to cargos and to adapter proteins that regulate dynein function. Cytoplasmic dynein 1 acts as a motor for the intracellular retrograde motility of vesicles and organelles along microtubules. May play a role in changing or maintaining the spatial distribution of cytoskeletal structures. Also a component of the nuclear pore complex where it may contribute to the stable association of the Nup82 subcomplex with the NPC. In Saccharomyces cerevisiae (strain ATCC 204508 / S288c) (Baker's yeast), this protein is Dynein light chain 1, cytoplasmic (DYN2).